Here is a 156-residue protein sequence, read N- to C-terminus: MKLFILAVGHKMPGWIASGFDEYTKRMPPELRIELREIKPELRSGGRSAESVMAAERQKIEAALPKGARIVALDERGRDWTTMQLAQALPAWQQDGRDVAFVIGGADGLDPELKARADVLLRISSMTLPHGMVRVLLAEQLYRAWSITQNHPYHRA.

S-adenosyl-L-methionine is bound by residues Leu-73, Gly-104, and 123–128 (ISSMTL).

The protein belongs to the RNA methyltransferase RlmH family. In terms of assembly, homodimer.

It localises to the cytoplasm. It catalyses the reaction pseudouridine(1915) in 23S rRNA + S-adenosyl-L-methionine = N(3)-methylpseudouridine(1915) in 23S rRNA + S-adenosyl-L-homocysteine + H(+). Its function is as follows. Specifically methylates the pseudouridine at position 1915 (m3Psi1915) in 23S rRNA. The protein is Ribosomal RNA large subunit methyltransferase H of Burkholderia ambifaria (strain MC40-6).